Reading from the N-terminus, the 203-residue chain is Imidazoleglycerol-phosphate dehydratase (203 aa).

This sequence belongs to the imidazoleglycerol-phosphate dehydratase family.

It is found in the cytoplasm. It catalyses the reaction D-erythro-1-(imidazol-4-yl)glycerol 3-phosphate = 3-(imidazol-4-yl)-2-oxopropyl phosphate + H2O. The protein operates within amino-acid biosynthesis; L-histidine biosynthesis; L-histidine from 5-phospho-alpha-D-ribose 1-diphosphate: step 6/9. The sequence is that of Imidazoleglycerol-phosphate dehydratase from Synechococcus sp. (strain RCC307).